The following is a 266-amino-acid chain: Type III pantothenate kinase (266 aa).

Position 15 to 22 (15 to 22) interacts with ATP; the sequence is EIGNSSTS. Residues tyrosine 105 and 112-115 contribute to the substrate site; that span reads GADR. Aspartate 114 functions as the Proton acceptor in the catalytic mechanism. Aspartate 135 is a K(+) binding site. Threonine 138 is a binding site for ATP. Residue threonine 191 coordinates substrate.

It belongs to the type III pantothenate kinase family. As to quaternary structure, homodimer. Requires NH4(+) as cofactor. K(+) serves as cofactor.

The protein localises to the cytoplasm. The enzyme catalyses (R)-pantothenate + ATP = (R)-4'-phosphopantothenate + ADP + H(+). It functions in the pathway cofactor biosynthesis; coenzyme A biosynthesis; CoA from (R)-pantothenate: step 1/5. In terms of biological role, catalyzes the phosphorylation of pantothenate (Pan), the first step in CoA biosynthesis. The sequence is that of Type III pantothenate kinase from Chlorobium chlorochromatii (strain CaD3).